A 128-amino-acid polypeptide reads, in one-letter code: Glycine cleavage system H protein (128 aa).

The Lipoyl-binding domain occupies 24–105 (SLTIGVTDHA…AYAAWLFKLK (82 aa)). N6-lipoyllysine is present on lysine 65.

This sequence belongs to the GcvH family. As to quaternary structure, the glycine cleavage system is composed of four proteins: P, T, L and H. (R)-lipoate serves as cofactor.

Its function is as follows. The glycine cleavage system catalyzes the degradation of glycine. The H protein shuttles the methylamine group of glycine from the P protein to the T protein. This Aromatoleum aromaticum (strain DSM 19018 / LMG 30748 / EbN1) (Azoarcus sp. (strain EbN1)) protein is Glycine cleavage system H protein.